Consider the following 485-residue polypeptide: Cysteine--tRNA ligase (485 aa).

Residue cysteine 28 coordinates Zn(2+). Positions 30–40 match the 'HIGH' region motif; it reads MTVYDYCHLGH. Zn(2+) contacts are provided by cysteine 212, histidine 237, and glutamate 241. The 'KMSKS' region motif lies at 269 to 273; sequence KMSKS. Lysine 272 lines the ATP pocket.

It belongs to the class-I aminoacyl-tRNA synthetase family. Monomer. It depends on Zn(2+) as a cofactor.

Its subcellular location is the cytoplasm. The catalysed reaction is tRNA(Cys) + L-cysteine + ATP = L-cysteinyl-tRNA(Cys) + AMP + diphosphate. This is Cysteine--tRNA ligase from Bordetella bronchiseptica (strain ATCC BAA-588 / NCTC 13252 / RB50) (Alcaligenes bronchisepticus).